Reading from the N-terminus, the 363-residue chain is Dihydroorotate dehydrogenase (quinone) (363 aa).

FMN is bound by residues 62–66 (AGYDK) and T86. K66 provides a ligand contact to substrate. 111-115 (NRLGF) lines the substrate pocket. Residues N140 and N171 each contribute to the FMN site. Position 171 (N171) interacts with substrate. S174 (nucleophile) is an active-site residue. N176 serves as a coordination point for substrate. K216 and S244 together coordinate FMN. Residue 245–246 (NT) coordinates substrate. FMN contacts are provided by residues G266, G295, and 316 to 317 (YT).

It belongs to the dihydroorotate dehydrogenase family. Type 2 subfamily. As to quaternary structure, monomer. FMN serves as cofactor.

It is found in the cell membrane. The catalysed reaction is (S)-dihydroorotate + a quinone = orotate + a quinol. It participates in pyrimidine metabolism; UMP biosynthesis via de novo pathway; orotate from (S)-dihydroorotate (quinone route): step 1/1. Functionally, catalyzes the conversion of dihydroorotate to orotate with quinone as electron acceptor. This chain is Dihydroorotate dehydrogenase (quinone), found in Chelativorans sp. (strain BNC1).